The following is a 207-amino-acid chain: GTP cyclohydrolase 1 (207 aa).

Zn(2+) is bound by residues Cys-88, His-91, and Cys-162.

It belongs to the GTP cyclohydrolase I family. Toroid-shaped homodecamer, composed of two pentamers of five dimers.

The enzyme catalyses GTP + H2O = 7,8-dihydroneopterin 3'-triphosphate + formate + H(+). It functions in the pathway cofactor biosynthesis; 7,8-dihydroneopterin triphosphate biosynthesis; 7,8-dihydroneopterin triphosphate from GTP: step 1/1. This is GTP cyclohydrolase 1 from Sulfurisphaera tokodaii (strain DSM 16993 / JCM 10545 / NBRC 100140 / 7) (Sulfolobus tokodaii).